Reading from the N-terminus, the 887-residue chain is Inter-alpha-trypsin inhibitor heavy chain H3 (887 aa).

Residues 1-21 form the signal peptide; sequence MVTLWWPCLVLALLSGLETSG. A propeptide spanning residues 22–33 is cleaved from the precursor; that stretch reads FPRSPLRLLGKR. The VIT domain maps to 29–158; it reads LLGKRSLPEG…KVIFELTYEE (130 aa). Residue N91 is glycosylated (N-linked (GlcNAc...) asparagine). One can recognise a VWFA domain in the interval 282–442; the sequence is PKNIAFVIDV…YNFLESLALE (161 aa). N580 carries N-linked (GlcNAc...) asparagine glycosylation. An Aspartate 1-(chondroitin 4-sulfate)-ester modification is found at D647. Positions 648 to 887 are excised as a propeptide; the sequence is PHFIIQVPGK…HTDYIVPSLF (240 aa).

It belongs to the ITIH family. In terms of assembly, I-alpha-I plasma protease inhibitors are assembled from one or two heavy chains (HC) and one light chain, bikunin. Pre-alpha-inhibitor (P-alpha-I) is composed of ITIH3/HC3 and bikunin. Heavy chains are linked to bikunin via chondroitin 4-sulfate esterified to the alpha-carboxyl of the C-terminal aspartate after propeptide cleavage.

It localises to the secreted. Its function is as follows. May act as a carrier of hyaluronan in serum or as a binding protein between hyaluronan and other matrix protein, including those on cell surfaces in tissues to regulate the localization, synthesis and degradation of hyaluronan which are essential to cells undergoing biological processes. This chain is Inter-alpha-trypsin inhibitor heavy chain H3 (Itih3), found in Rattus norvegicus (Rat).